The chain runs to 462 residues: Toxin CqTX-A (462 aa).

A signal peptide spans 1 to 19; that stretch reads MANMLYFSLLALLFMTGIA. N-linked (GlcNAc...) asparagine glycosylation occurs at Asn-174.

The protein belongs to the jellyfish toxin family. Type I subfamily. Post-translationally, contains disulfide bonds. In terms of processing, N-glycosylated.

It localises to the secreted. Its subcellular location is the nematocyst. The protein localises to the target cell membrane. Functionally, critical allergen and main toxic protein of C.quadrigatus venom. Has potent hemolytic activity. Is lethal to crayfish. Causes cutaneous inflammation in humans. May act as a pore-forming toxin, disrupting normal transmembrane ion concentration gradients in susceptible cells. This chain is Toxin CqTX-A, found in Chiropsoides quadrigatus (Box jellyfish).